A 326-amino-acid polypeptide reads, in one-letter code: Eukaryotic translation initiation factor 2 subunit 1 (326 aa).

Residues 24 to 95 (DDLIMVKVNR…QKGYIDLSKR (72 aa)) enclose the S1 motif domain. Residue S59 is modified to Phosphoserine; by eIK1, eIK2 and PK4. The disordered stretch occupies residues 291 to 326 (LDKHDGLSSDDEYSSDGDEDDSSNDDDNSSDEDDDD). Residues 298–326 (SSDDEYSSDGDEDDSSNDDDNSSDEDDDD) are compositionally biased toward acidic residues.

It belongs to the eIF-2-alpha family. In terms of processing, phosphorylates at Ser-59 in mature trophozoites, schizonts and gametocytes but not in rings and young trophozoites. Phosphorylates at Ser-59 by eIK2 in salivary gland sporozoites but not in midgut and hemocoel sporozoites. Dephosphorylated at Ser-59 by UIS2. Phosphorylation of eIF2alpha subunit of the pre-initiation complex eIF2 inhibits recycling of inactive eIF2-GDP to active eIF2-GTP by limiting the activity of the guanine nucleotide exchange factor eIF2B and thus, inhibits protein translation.

It localises to the cytoplasm. The protein resides in the stress granule. Functionally, functions in the early steps of protein synthesis by forming a ternary complex with GTP and initiator tRNA. May regulate protein translation in response to amino acid starvation. May regulate protein at various stages of parasite development. This chain is Eukaryotic translation initiation factor 2 subunit 1, found in Plasmodium berghei (strain Anka).